We begin with the raw amino-acid sequence, 186 residues long: MSTIPTTRSGLVVWFTGLSGAGKTTLARALATLLQEAGYPVEQLDGDVVREHLSKGLGFSREDRDTNIRRIGFVANLLAKHGVIVLVSAISPYRETRAEVLAAAPRKLEVFVEAPLDVLIQRDVKGLYAKALRGEIAQFTGISDPYEPPLHPDVHLRTDLMSLPECLDHLLAALERLDIVVKVSHQ.

17–24 (GLSGAGKT) lines the ATP pocket. S91 acts as the Phosphoserine intermediate in catalysis.

This sequence belongs to the APS kinase family.

It carries out the reaction adenosine 5'-phosphosulfate + ATP = 3'-phosphoadenylyl sulfate + ADP + H(+). It participates in sulfur metabolism; hydrogen sulfide biosynthesis; sulfite from sulfate: step 2/3. Functionally, catalyzes the synthesis of activated sulfate. The sequence is that of Adenylyl-sulfate kinase from Chloroflexus aurantiacus (strain ATCC 29364 / DSM 637 / Y-400-fl).